The following is a 212-amino-acid chain: Claudin-7-A (212 aa).

The Cytoplasmic segment spans residues 1-7; the sequence is MANSGVQ. Residues 8–28 traverse the membrane as a helical segment; sequence LLGFGLSLIGIIGLIVGTILP. The Extracellular segment spans residues 29-81; sequence QWKMSAYVGDSIITAVATYQGLWMSCAFQSTGQLQCKIYDSILQLDSDLQATR. Residues 82 to 102 form a helical membrane-spanning segment; the sequence is ALMIVGIIVSIAGLGVASIGM. Residues 103 to 119 are Cytoplasmic-facing; the sequence is KCTTCGADDKVRKTRTA. Residues 120–140 traverse the membrane as a helical segment; it reads MTGGIILLVGALCAVVACSWF. Residues 141-162 lie on the Extracellular side of the membrane; sequence AHNVIRAFYNPFTPVNTKFEFG. Residues 163–183 traverse the membrane as a helical segment; sequence AAIFIAWGGSFLDVLGGAMLA. Residues 184-212 are Cytoplasmic-facing; that stretch reads ASCPRSKQVSKYPKSNSTRSANGSNKEYV. Positions 191–212 are disordered; sequence QVSKYPKSNSTRSANGSNKEYV.

The protein belongs to the claudin family.

The protein localises to the cell junction. The protein resides in the tight junction. It is found in the cell membrane. Plays a major role in tight junction-specific obliteration of the intercellular space. In Danio rerio (Zebrafish), this protein is Claudin-7-A.